A 243-amino-acid chain; its full sequence is DNA repair protein RecO (243 aa).

Belongs to the RecO family.

In terms of biological role, involved in DNA repair and RecF pathway recombination. This chain is DNA repair protein RecO, found in Caulobacter vibrioides (strain NA1000 / CB15N) (Caulobacter crescentus).